Reading from the N-terminus, the 418-residue chain is Gamma-glutamyl phosphate reductase (418 aa).

Belongs to the gamma-glutamyl phosphate reductase family.

The protein resides in the cytoplasm. It carries out the reaction L-glutamate 5-semialdehyde + phosphate + NADP(+) = L-glutamyl 5-phosphate + NADPH + H(+). It functions in the pathway amino-acid biosynthesis; L-proline biosynthesis; L-glutamate 5-semialdehyde from L-glutamate: step 2/2. In terms of biological role, catalyzes the NADPH-dependent reduction of L-glutamate 5-phosphate into L-glutamate 5-semialdehyde and phosphate. The product spontaneously undergoes cyclization to form 1-pyrroline-5-carboxylate. This is Gamma-glutamyl phosphate reductase from Thermodesulfovibrio yellowstonii (strain ATCC 51303 / DSM 11347 / YP87).